The sequence spans 201 residues: Glutathione S-transferase GstA (201 aa).

The region spanning Met-1–Gln-81 is the GST N-terminal domain. Glutathione contacts are provided by residues Cys-10, Lys-35, Val-52, Glu-65–Gly-66, Asn-99, and Thr-103–His-106. In terms of domain architecture, GST C-terminal spans Asn-87–Lys-201.

The protein belongs to the GST superfamily. Beta family. In terms of assembly, homodimer.

The protein resides in the cytoplasm. The enzyme catalyses RX + glutathione = an S-substituted glutathione + a halide anion + H(+). Conjugation of reduced glutathione to a wide number of exogenous and endogenous hydrophobic electrophiles. This is Glutathione S-transferase GstA (gstA) from Escherichia coli O157:H7.